A 25-amino-acid chain; its full sequence is Omega-conotoxin MVIIB (25 aa).

3 disulfides stabilise this stretch: cysteine 1-cysteine 16, cysteine 8-cysteine 20, and cysteine 15-cysteine 25. Cysteine 25 is modified (cysteine amide).

It belongs to the conotoxin O1 superfamily. Expressed by the venom duct.

The protein resides in the secreted. Its function is as follows. Omega-conotoxins act at presynaptic membranes, they bind and block voltage-gated calcium channels (Cav). This Conus magus (Magical cone) protein is Omega-conotoxin MVIIB.